The following is a 180-amino-acid chain: Major urinary protein 17 (180 aa).

Residues 1–18 (MKMLLLLCLGLTLVCVHA) form the signal peptide. Cysteines 82 and 175 form a disulfide.

This sequence belongs to the calycin superfamily. Lipocalin family. Because of their involvement in the coordination of social behavior, Mup proteins are thought to exhibit variable expression depending upon gender, age and status of the studied individuals. Expression may also be strain-specific: in strains C57BL/6J and 129S7, transcriptional support is lacking for Mup17.

The protein resides in the secreted. Major urinary proteins (Mups) bind pheromones, thus stabilize them and allow slow release into the air from urine marks. May protect pheromones from oxidation. May also act as pheromones themselves. In this context, they play a role in the regulation of social behaviors, such as aggression, mating, pup-suckling, territory establishment and dominance. The protein is Major urinary protein 17 (Mup17) of Mus musculus (Mouse).